Consider the following 36-residue polypeptide: Peroxiredoxin-4 (36 aa).

The protein belongs to the peroxiredoxin family. AhpC/Prx1 subfamily. As to quaternary structure, homodimer; disulfide-linked, upon oxidation. In terms of tissue distribution, venom gland.

It localises to the secreted. It carries out the reaction a hydroperoxide + [thioredoxin]-dithiol = an alcohol + [thioredoxin]-disulfide + H2O. Venom peroxiredoxin enzyme that may play a role as part of a redox pathway leading to the structural/functional diversification of toxins through a disulfide bond engineering mechanism. The chain is Peroxiredoxin-4 from Crotalus atrox (Western diamondback rattlesnake).